The sequence spans 184 residues: Photosystem I assembly protein Ycf4 (184 aa).

Helical transmembrane passes span Gly-20 to Ile-40 and Ile-64 to Ile-84.

Belongs to the Ycf4 family.

Its subcellular location is the plastid. It localises to the chloroplast thylakoid membrane. In terms of biological role, seems to be required for the assembly of the photosystem I complex. The sequence is that of Photosystem I assembly protein Ycf4 from Citrus sinensis (Sweet orange).